A 255-amino-acid polypeptide reads, in one-letter code: 5-oxoprolinase subunit A (255 aa).

This sequence belongs to the LamB/PxpA family. In terms of assembly, forms a complex composed of PxpA, PxpB and PxpC.

The enzyme catalyses 5-oxo-L-proline + ATP + 2 H2O = L-glutamate + ADP + phosphate + H(+). Functionally, catalyzes the cleavage of 5-oxoproline to form L-glutamate coupled to the hydrolysis of ATP to ADP and inorganic phosphate. The polypeptide is 5-oxoprolinase subunit A (Clostridium beijerinckii (strain ATCC 51743 / NCIMB 8052) (Clostridium acetobutylicum)).